We begin with the raw amino-acid sequence, 488 residues long: Glutamate--tRNA ligase (488 aa).

The 'HIGH' region signature appears at 11 to 21 (PSPTGQIHIGN). Zn(2+) contacts are provided by Cys-108, Cys-110, Cys-135, and Asp-137. Residues 252–256 (KLSKR) carry the 'KMSKS' region motif. ATP is bound at residue Lys-255.

Belongs to the class-I aminoacyl-tRNA synthetase family. Glutamate--tRNA ligase type 1 subfamily. As to quaternary structure, monomer. The cofactor is Zn(2+).

The protein resides in the cytoplasm. The catalysed reaction is tRNA(Glu) + L-glutamate + ATP = L-glutamyl-tRNA(Glu) + AMP + diphosphate. Functionally, catalyzes the attachment of glutamate to tRNA(Glu) in a two-step reaction: glutamate is first activated by ATP to form Glu-AMP and then transferred to the acceptor end of tRNA(Glu). This is Glutamate--tRNA ligase from Natranaerobius thermophilus (strain ATCC BAA-1301 / DSM 18059 / JW/NM-WN-LF).